Consider the following 101-residue polypeptide: Hg-scorpine-like-2 (101 aa).

The first 17 residues, 1-17 (MKLTILILLVITSFCSC), serve as a signal peptide directing secretion. A BetaSPN-type CS-alpha/beta domain is found at 60 to 100 (QQLCMFNKDVAGWCEKSCQQSAHQKGYCHGTKCKCGIPLNY). Cystine bridges form between Cys-63-Cys-87, Cys-73-Cys-92, and Cys-77-Cys-94.

The protein belongs to the long chain scorpion toxin family. Class 3 subfamily. In terms of tissue distribution, expressed by the venom gland.

It is found in the secreted. In terms of biological role, inhibits voltage-gated potassium channels. This Hoffmannihadrurus gertschi (Scorpion) protein is Hg-scorpine-like-2.